A 544-amino-acid polypeptide reads, in one-letter code: Methionine--tRNA ligase 2 (544 aa).

Residues 10–20 carry the 'HIGH' region motif; the sequence is PYANGSLHLGH. Residues C141, C144, C153, and C156 each coordinate Zn(2+). Positions 329–333 match the 'KMSKS' region motif; sequence KLSTS. T332 lines the ATP pocket.

Belongs to the class-I aminoacyl-tRNA synthetase family. MetG type 1 subfamily. Monomer. The cofactor is Zn(2+).

Its subcellular location is the cytoplasm. It catalyses the reaction tRNA(Met) + L-methionine + ATP = L-methionyl-tRNA(Met) + AMP + diphosphate. In terms of biological role, is required not only for elongation of protein synthesis but also for the initiation of all mRNA translation through initiator tRNA(fMet) aminoacylation. The polypeptide is Methionine--tRNA ligase 2 (Bacillus cereus (strain ATCC 14579 / DSM 31 / CCUG 7414 / JCM 2152 / NBRC 15305 / NCIMB 9373 / NCTC 2599 / NRRL B-3711)).